The primary structure comprises 134 residues: Transcriptional activator protein (134 aa).

The Nuclear localization signal motif lies at 17-31 (KVQHRIAKKTTRRRR). A zinc finger lies at 36 to 53 (CGCSYFVALGCHNHGFTH). The interval 73 to 103 (KSPVFQDNQTPRETISEEPRHNHNTSPIQLQ) is disordered. The span at 75–85 (PVFQDNQTPRE) shows a compositional bias: polar residues. A transactivation region spans residues 119–134 (NLDSFTSSDLAFLKSI).

The protein belongs to the geminiviridae transcriptional activator protein family. As to quaternary structure, monomer. Homodimer. Homooligomer. Self-interaction correlates with nuclear localization and efficient activation of transcription. Monomers suppress local silencing by interacting with and inactivating host adenosine kinase 2 (ADK2) in the cytoplasm. Interacts with and inhibits host SNF1 kinase. Binds to ssDNA. May interact with host RPS27A. Post-translationally, phosphorylated.

The protein localises to the host nucleus. Its subcellular location is the host cytoplasm. In terms of biological role, multifunctional protein that modulates host antiviral defenses and promotes host attractiveness to insect vectors. Acts as a suppressor of RNA-mediated gene silencing, also known as post-transcriptional gene silencing (PTGS), a mechanism of plant viral defense that limits the accumulation of viral RNAs. TrAP suppresses the host RNA silencing by inhibiting adenosine kinase 2 (ADK2), a kinase involved in a general methylation pathway. Also suppresses the host basal defense by interacting with and inhibiting SNF1 kinase, a key regulator of cell metabolism implicated in innate antiviral defense. Inhibits signal transduction by the phytohormone jasmonate, making the infected plant more attractive to aphids, which are the second host to play a role as a dissemination vector. Acts by binding to ubiquitin precursor RPS27A, thereby preventing ubiquitin degradation of JAZ. The protein is Transcriptional activator protein of Tomato yellow leaf curl China virus (TYLCCNV).